The sequence spans 592 residues: Syntaxin-binding protein 3 (592 aa).

The interval 1–255 is mediates interaction with DOC2B; that stretch reads MAPPVSERGL…STVLHELTFQ (255 aa).

It belongs to the STXBP/unc-18/SEC1 family. In terms of assembly, interacts with STX4. Interacts with DOC2B; the interaction is direct, occurs at the cell membrane, excludes interaction with STX4 and regulates glucose-stimulated insulin secretion. Phosphorylated by PKC in platelets in response to thrombin stimulation; phosphorylation inhibits binding to STX4. As to expression, ubiquitously expressed in all tissues tested.

The protein resides in the cytoplasm. It localises to the cytosol. It is found in the cell membrane. In terms of biological role, together with STX4 and VAMP2, may play a role in insulin-dependent movement of GLUT4 and in docking/fusion of intracellular GLUT4-containing vesicles with the cell surface in adipocytes. In Mus musculus (Mouse), this protein is Syntaxin-binding protein 3 (Stxbp3).